The following is a 253-amino-acid chain: Imidazole glycerol phosphate synthase subunit HisF (253 aa).

Active-site residues include D11 and D130.

This sequence belongs to the HisA/HisF family. As to quaternary structure, heterodimer of HisH and HisF.

The protein localises to the cytoplasm. It catalyses the reaction 5-[(5-phospho-1-deoxy-D-ribulos-1-ylimino)methylamino]-1-(5-phospho-beta-D-ribosyl)imidazole-4-carboxamide + L-glutamine = D-erythro-1-(imidazol-4-yl)glycerol 3-phosphate + 5-amino-1-(5-phospho-beta-D-ribosyl)imidazole-4-carboxamide + L-glutamate + H(+). Its pathway is amino-acid biosynthesis; L-histidine biosynthesis; L-histidine from 5-phospho-alpha-D-ribose 1-diphosphate: step 5/9. Functionally, IGPS catalyzes the conversion of PRFAR and glutamine to IGP, AICAR and glutamate. The HisF subunit catalyzes the cyclization activity that produces IGP and AICAR from PRFAR using the ammonia provided by the HisH subunit. The protein is Imidazole glycerol phosphate synthase subunit HisF of Caldanaerobacter subterraneus subsp. tengcongensis (strain DSM 15242 / JCM 11007 / NBRC 100824 / MB4) (Thermoanaerobacter tengcongensis).